Consider the following 366-residue polypeptide: MSGNTLGLLFSVTTFGESHGPAIGAVIDGCPPGMTLSAEDIQPDLDRRKPGTSRHVTQRKEEDLVEILSGVYEGKTTGTPICLLIRNTDQRSKDYSNIAETFRPGHADYTYWHKYGIRDPRGGGRSSARLTAPTVAAGAVAKKWLREKFGIEIHGFMSQLGDIHIPFMDWNEVPNNPFFAPNAEIVPELETYMDALRKDGDSVGARIEVVATGVPVGWGEPLFDRLDADIAHAMMGLNAVKGVEIGAGFHAVSQRGSEHGDELTPEGFVGNNAGGILGGISTGQDISVSLAIKPTSSIRTPRRSIDKAGDPAVVETFGRHDPCVGIRATPIAEALLALVLIDHALRHRAQCGDVSVETPAIPAKAS.

NADP(+)-binding residues include Arg-48 and Arg-54. FMN contacts are provided by residues 125 to 127 (RSS), 238 to 239 (NA), Gly-278, 293 to 297 (KPTSS), and Arg-319.

The protein belongs to the chorismate synthase family. In terms of assembly, homotetramer. FMNH2 serves as cofactor.

The enzyme catalyses 5-O-(1-carboxyvinyl)-3-phosphoshikimate = chorismate + phosphate. Its pathway is metabolic intermediate biosynthesis; chorismate biosynthesis; chorismate from D-erythrose 4-phosphate and phosphoenolpyruvate: step 7/7. Catalyzes the anti-1,4-elimination of the C-3 phosphate and the C-6 proR hydrogen from 5-enolpyruvylshikimate-3-phosphate (EPSP) to yield chorismate, which is the branch point compound that serves as the starting substrate for the three terminal pathways of aromatic amino acid biosynthesis. This reaction introduces a second double bond into the aromatic ring system. The protein is Chorismate synthase of Ralstonia pickettii (strain 12J).